A 330-amino-acid polypeptide reads, in one-letter code: Lymphocyte-specific protein 1 (330 aa).

Basic and acidic residues-rich tracts occupy residues 1-20 and 37-62; these read MAEAAIDPRCEEQEELHAED and AREQRQRERERQLQDQDKDKEDDGGH. Disordered stretches follow at residues 1–246 and 281–302; these read MAEA…SIEL and DMSKKSLWEQKGGSKISSTIKS. Positions 66 to 77 are enriched in polar residues; the sequence is QPGQQTLISLKS. Phosphoserine; by CK2 is present on residues serine 77 and serine 78. The segment covering 113–135 has biased composition (basic and acidic residues); the sequence is QSERPEEKQTEESSHQAKVHLEE. The residue at position 166 (threonine 166) is a Phosphothreonine. 4 positions are modified to phosphoserine: serine 168, serine 179, serine 180, and serine 184. 2 stretches are compositionally biased toward polar residues: residues 206-215 and 223-242; these read VKKSQPTLPI and QQYTQATESSGRTPKLSRQP. Serine 243 carries the post-translational modification Phosphoserine; by MAPKAPK2. The segment covering 291-302 has biased composition (low complexity); sequence KGGSKISSTIKS. Lysine 318 is modified (N6-acetyllysine).

Post-translationally, phosphorylated by casein kinase II, protein kinase C and MAPKAPK2. Phosphorylation by PKC induces translocation from membrane to cytoplasm. Phosphorylation by MAPKAPK2 may regulate neutrophil chemotaxis. Isoform 1 is expressed in normal mouse B and T-lymphocytes and in transformed B-cells but not (or in smaller amounts) in nine T-lymphoma lines tested. Isoform 2 is expressed in non-lymphoid cell lines (myocytes, stromal cells, fibroblasts).

The protein resides in the cell membrane. In terms of biological role, may play a role in mediating neutrophil activation and chemotaxis. This chain is Lymphocyte-specific protein 1 (Lsp1), found in Mus musculus (Mouse).